Here is a 376-residue protein sequence, read N- to C-terminus: Chaperone protein DnaJ (376 aa).

Positions Asp5 to Gly69 constitute a J domain. The CR-type zinc-finger motif lies at Gly133–Thr215. Zn(2+) is bound by residues Cys146, Cys149, Cys163, Cys166, Cys189, Cys192, Cys203, and Cys206. 4 CXXCXGXG motif repeats span residues Cys146–Gly153, Cys163–Gly170, Cys189–Gly196, and Cys203–Gly210.

The protein belongs to the DnaJ family. In terms of assembly, homodimer. The cofactor is Zn(2+).

It is found in the cytoplasm. Participates actively in the response to hyperosmotic and heat shock by preventing the aggregation of stress-denatured proteins and by disaggregating proteins, also in an autonomous, DnaK-independent fashion. Unfolded proteins bind initially to DnaJ; upon interaction with the DnaJ-bound protein, DnaK hydrolyzes its bound ATP, resulting in the formation of a stable complex. GrpE releases ADP from DnaK; ATP binding to DnaK triggers the release of the substrate protein, thus completing the reaction cycle. Several rounds of ATP-dependent interactions between DnaJ, DnaK and GrpE are required for fully efficient folding. Also involved, together with DnaK and GrpE, in the DNA replication of plasmids through activation of initiation proteins. The sequence is that of Chaperone protein DnaJ from Listeria welshimeri serovar 6b (strain ATCC 35897 / DSM 20650 / CCUG 15529 / CIP 8149 / NCTC 11857 / SLCC 5334 / V8).